A 314-amino-acid chain; its full sequence is D-alanine--D-alanine ligase (314 aa).

An ATP-grasp domain is found at 115–310; the sequence is KQVWQSVGLV…FNELVLEILA (196 aa). 141-196 lines the ATP pocket; the sequence is LDSLGGQGFVKPAHEGSSIGMSVVSTAQELKAAYEKAAHYDAKVLVERRIVGREFT. The Mg(2+) site is built by Asp-264, Glu-277, and Asn-279.

Belongs to the D-alanine--D-alanine ligase family. Mg(2+) serves as cofactor. Requires Mn(2+) as cofactor.

It is found in the cytoplasm. It catalyses the reaction 2 D-alanine + ATP = D-alanyl-D-alanine + ADP + phosphate + H(+). Its pathway is cell wall biogenesis; peptidoglycan biosynthesis. Its function is as follows. Cell wall formation. In Saccharophagus degradans (strain 2-40 / ATCC 43961 / DSM 17024), this protein is D-alanine--D-alanine ligase.